The primary structure comprises 190 residues: Small ribosomal subunit protein uS5 (190 aa).

The S5 DRBM domain maps to F21–V84. Positions K156 to A190 are disordered. Basic and acidic residues predominate over residues K171–A182.

This sequence belongs to the universal ribosomal protein uS5 family. As to quaternary structure, part of the 30S ribosomal subunit. Contacts proteins S4 and S8.

Its function is as follows. With S4 and S12 plays an important role in translational accuracy. In terms of biological role, located at the back of the 30S subunit body where it stabilizes the conformation of the head with respect to the body. The chain is Small ribosomal subunit protein uS5 from Ruegeria pomeroyi (strain ATCC 700808 / DSM 15171 / DSS-3) (Silicibacter pomeroyi).